We begin with the raw amino-acid sequence, 258 residues long: MLKLRVIPCLDVKNGRVVKGVNFVSLRDAGDPVEQAAVYDAAGADELTFLDITASHENRDTILDVVSRTAERIFLPLTVGGGVRTTDDMRRLLLAGADKCAMNSAAVARPDLVSEAARKFGSQCVVVAVDARSDGHGSWEVYTHGGRTPTGRNVIDWCREVVERGAGEILLTSMDRDGTGSGFDLDLLCAACTAVRVPIVASGGVGTLEHFVEGARAGATGLLAASVFHFGQFTIPQVKQALADAGLPVRHTPAHPVP.

Residues aspartate 11 and aspartate 130 contribute to the active site.

Belongs to the HisA/HisF family. As to quaternary structure, heterodimer of HisH and HisF.

It is found in the cytoplasm. The catalysed reaction is 5-[(5-phospho-1-deoxy-D-ribulos-1-ylimino)methylamino]-1-(5-phospho-beta-D-ribosyl)imidazole-4-carboxamide + L-glutamine = D-erythro-1-(imidazol-4-yl)glycerol 3-phosphate + 5-amino-1-(5-phospho-beta-D-ribosyl)imidazole-4-carboxamide + L-glutamate + H(+). It functions in the pathway amino-acid biosynthesis; L-histidine biosynthesis; L-histidine from 5-phospho-alpha-D-ribose 1-diphosphate: step 5/9. Functionally, IGPS catalyzes the conversion of PRFAR and glutamine to IGP, AICAR and glutamate. The HisF subunit catalyzes the cyclization activity that produces IGP and AICAR from PRFAR using the ammonia provided by the HisH subunit. The protein is Imidazole glycerol phosphate synthase subunit HisF of Gluconacetobacter diazotrophicus (strain ATCC 49037 / DSM 5601 / CCUG 37298 / CIP 103539 / LMG 7603 / PAl5).